The primary structure comprises 279 residues: Probable diacylglycerol pyrophosphate phosphatase 1 (279 aa).

Residues Met-1–Asp-17 are Lumenal-facing. A helical transmembrane segment spans residues Tyr-18 to Phe-38. Residues Thr-39–Gln-58 are Cytoplasmic-facing. The helical transmembrane segment at Val-59–Phe-79 threads the bilayer. Topologically, residues Gly-80–Ser-86 are lumenal. A helical transmembrane segment spans residues Leu-87–Val-107. The Cytoplasmic segment spans residues Ser-108–Thr-163. The tract at residues Lys-111–Pro-119 is phosphatase sequence motif I. The interval Pro-159 to His-162 is phosphatase sequence motif II. The helical transmembrane segment at Ser-164–Phe-184 threads the bilayer. Topologically, residues Arg-185–Lys-187 are lumenal. A helical membrane pass occupies residues Thr-188–Leu-208. Residues Ser-209–Asp-220 are Cytoplasmic-facing. Residues Ser-209–Asp-220 form a phosphatase sequence motif III region. A helical membrane pass occupies residues Ile-221–Pro-241. Topologically, residues Pro-242–Val-279 are lumenal.

This sequence belongs to the PA-phosphatase related phosphoesterase family.

Its subcellular location is the vacuole membrane. It localises to the endoplasmic reticulum membrane. The enzyme catalyses a 1,2-diacyl-sn-glycerol 3-diphosphate + H2O = a 1,2-diacyl-sn-glycero-3-phosphate + phosphate + H(+). It catalyses the reaction a 1,2-diacyl-sn-glycero-3-phosphate + H2O = a 1,2-diacyl-sn-glycerol + phosphate. Its function is as follows. Catalyzes the dephosphorylation of diacylglycerol phosphate (DGPP) to phosphatidate (PA) and the subsequent dephosphorylation of PA to diacylglycerol (DAG). In Schizosaccharomyces pombe (strain 972 / ATCC 24843) (Fission yeast), this protein is Probable diacylglycerol pyrophosphate phosphatase 1 (dpp1).